Reading from the N-terminus, the 180-residue chain is Ribulose bisphosphate carboxylase small subunit, chloroplastic 4 (180 aa).

Residues Met1–Arg56 constitute a chloroplast transit peptide.

The protein belongs to the RuBisCO small chain family. Heterohexadecamer of 8 large and 8 small subunits.

Its subcellular location is the plastid. The protein localises to the chloroplast. Functionally, ruBisCO catalyzes two reactions: the carboxylation of D-ribulose 1,5-bisphosphate, the primary event in carbon dioxide fixation, as well as the oxidative fragmentation of the pentose substrate. Both reactions occur simultaneously and in competition at the same active site. Although the small subunit is not catalytic it is essential for maximal activity. This chain is Ribulose bisphosphate carboxylase small subunit, chloroplastic 4, found in Solanum tuberosum (Potato).